We begin with the raw amino-acid sequence, 970 residues long: Longitudinals lacking protein, isoforms F/I/K/T (970 aa).

The BTB domain maps to 32–97 (VDCTLAAEGK…MYRGEVNISQ (66 aa)). 4 disordered regions span residues 115 to 200 (LSDN…SSVL), 228 to 340 (SSGP…ASAS), 447 to 468 (DAQQ…EGAQ), and 790 to 843 (QTVH…LQDD). 4 stretches are compositionally biased toward low complexity: residues 162–175 (SGDV…SSSP), 228–251 (SSGP…LTST), 263–293 (TSST…QTTS), and 329–340 (NSATGPNPASAS). 2 stretches are compositionally biased toward polar residues: residues 447-456 (DAQQRDPQAS) and 808-818 (QLQTHHIQTVV). A compositionally biased stretch (low complexity) spans 819 to 828 (QSSSGQQQHD). The C2H2-type 1; degenerate zinc-finger motif lies at 903–925 (YVCRHCGKKYRWKSTLRRHENVE). Residues 933 to 955 (HPCPYCSYKAKQRGNLGVHVRKH) form a C2H2-type 2 zinc finger.

As to expression, by stage 11, isoform F is expressed throughout the mesoderm whereas isoform T, and at low levels isoform I, is expressed throughout the ectoderm. Isoform K is expressed in both mesoderm and ectoderm. Expression becomes restricted during later stages; starting from stage 14 to 15, isoform F is expressed in the gut. Isoform I is expressed in the CNS. Isoform I and isoform F show expression in the epithelium starting at stage 14, though for isoform I the CNS expression remains predominant. Expression is also seen in specific types of cells in the embryo; isoform K is expressed in the ventral furrow at stage 5 and in a dynamic pattern in the ventral neurogenic region starting at stage 7. Isoform T is expressed around the tracheal pits at stage 11. Isoform F shows transient enrichment in a dorsal cell layer in the CNS at stages 13 and 14.

It is found in the nucleus. Putative transcription factor required for axon growth and guidance in the central and peripheral nervous systems. Repels CNS axons away from the midline by promoting the expression of the midline repellent sli and its receptor robo. This is Longitudinals lacking protein, isoforms F/I/K/T from Drosophila melanogaster (Fruit fly).